The following is a 258-amino-acid chain: Synaptosomal-associated protein 29 (258 aa).

The interval 1–41 (MSAYPKSYNPFDDDGEDEGARPAPWRDARDLPDGPDAPADR) is disordered. The segment covering 18–32 (EGARPAPWRDARDLP) has biased composition (basic and acidic residues). A coiled-coil region spans residues 76–107 (ASSEELARQRGVLERTEKMVDKMDQDLKISQK). Phosphoserine occurs at positions 77, 78, and 114. Residues 127–190 (PVETPPEQNG…GSAVSTDAYP (64 aa)) form a disordered region. Phosphothreonine occurs at positions 130 and 137. The segment covering 132 to 144 (PEQNGTLASQPNS) has biased composition (polar residues). A phosphoserine mark is found at S163, S182, S185, S204, and S210. Residues 196 to 258 (QAYHQKIDSN…KSTERKVRQL (63 aa)) enclose the t-SNARE coiled-coil homology domain.

It belongs to the SNAP-25 family. As to quaternary structure, forms a SNARE complex, composed of VAMP8, SNAP29 and STX17, involved in fusion of autophagosome with lysosome. Interacts with multiple syntaxins including STX6. Interacts with EIPR1. Interacts with STX17; this interaction is increased in the absence of TMEM39A.

The protein resides in the cytoplasm. It localises to the golgi apparatus membrane. The protein localises to the cytoplasmic vesicle. Its subcellular location is the autophagosome membrane. It is found in the cell projection. The protein resides in the cilium membrane. In terms of biological role, SNAREs, soluble N-ethylmaleimide-sensitive factor-attachment protein receptors, are essential proteins for fusion of cellular membranes. SNAREs localized on opposing membranes assemble to form a trans-SNARE complex, an extended, parallel four alpha-helical bundle that drives membrane fusion. SNAP29 is a SNARE involved in autophagy through the direct control of autophagosome membrane fusion with the lysososome membrane. Also plays a role in ciliogenesis by regulating membrane fusions. In Pongo abelii (Sumatran orangutan), this protein is Synaptosomal-associated protein 29.